The chain runs to 625 residues: Chromatin structure-remodeling complex subunit RSC4 (625 aa).

A disordered region spans residues 1-35 (MVVKKRKLATEAGGSDERPKYLPGKHPKNQEKTPH). 2 consecutive Bromo domains span residues 53–158 (WHIP…VLKA) and 181–292 (KLVD…IQKE). Phosphoserine occurs at positions 199 and 545. Polar residues predominate over residues 536–552 (RTSNVNSNLSQPQQQEN). Residues 536-555 (RTSNVNSNLSQPQQQENDVI) form a disordered region.

Component of the two forms of the RSC complex composed of at least either RSC1 or RSC2, and ARP7, ARP9, LDB7, NPL6, RSC3, RSC30, RSC4, RSC58, RSC6, RSC8, RSC9, SFH1, STH1, HTL1 and probably RTT102. The complexes interact with histone and histone variant components of centromeric chromatin.

Its subcellular location is the nucleus. Functionally, component of the chromatin structure remodeling complex (RSC), which is involved in transcription regulation and nucleosome positioning. RSC is responsible for the transfer of a histone octamer from a nucleosome core particle to naked DNA. The reaction requires ATP and involves an activated RSC-nucleosome intermediate. Remodeling reaction also involves DNA translocation, DNA twist and conformational change. As a reconfigurer of centromeric and flanking nucleosomes, RSC complex is required both for proper kinetochore function in chromosome segregation and, via a PKC1-dependent signaling pathway, for organization of the cellular cytoskeleton. The polypeptide is Chromatin structure-remodeling complex subunit RSC4 (RSC4) (Saccharomyces cerevisiae (strain ATCC 204508 / S288c) (Baker's yeast)).